Consider the following 119-residue polypeptide: Ribonuclease (119 aa).

2 residues coordinate substrate: lysine 6 and arginine 9. Histidine 11 serves as the catalytic Proton acceptor. 3 cysteine pairs are disulfide-bonded: cysteine 26/cysteine 81, cysteine 40/cysteine 92, and cysteine 58/cysteine 107. Residues 41 to 45 (KFTNT) and arginine 82 each bind substrate. The active-site Proton donor is histidine 114.

It belongs to the pancreatic ribonuclease family. In terms of assembly, monomer. Interacts with and forms tight 1:1 complexes with RNH1. Dimerization of two such complexes may occur. Interaction with RNH1 inhibits this protein.

It localises to the secreted. It catalyses the reaction an [RNA] containing cytidine + H2O = an [RNA]-3'-cytidine-3'-phosphate + a 5'-hydroxy-ribonucleotide-3'-[RNA].. The enzyme catalyses an [RNA] containing uridine + H2O = an [RNA]-3'-uridine-3'-phosphate + a 5'-hydroxy-ribonucleotide-3'-[RNA].. Its function is as follows. Endonuclease that catalyzes the cleavage of RNA on the 3' side of pyrimidine nucleotides. Acts on single-stranded and double-stranded RNA. The sequence is that of Ribonuclease from Chelonia mydas (Green sea-turtle).